We begin with the raw amino-acid sequence, 312 residues long: Lipoyl synthase (312 aa).

7 residues coordinate [4Fe-4S] cluster: Cys37, Cys42, Cys48, Cys67, Cys71, Cys74, and Ser281. The Radical SAM core domain maps to 52 to 270 (RDGPGTATFM…AVAEREFDFL (219 aa)).

Belongs to the radical SAM superfamily. Lipoyl synthase family. [4Fe-4S] cluster serves as cofactor.

The protein localises to the cytoplasm. It catalyses the reaction [[Fe-S] cluster scaffold protein carrying a second [4Fe-4S](2+) cluster] + N(6)-octanoyl-L-lysyl-[protein] + 2 oxidized [2Fe-2S]-[ferredoxin] + 2 S-adenosyl-L-methionine + 4 H(+) = [[Fe-S] cluster scaffold protein] + N(6)-[(R)-dihydrolipoyl]-L-lysyl-[protein] + 4 Fe(3+) + 2 hydrogen sulfide + 2 5'-deoxyadenosine + 2 L-methionine + 2 reduced [2Fe-2S]-[ferredoxin]. It functions in the pathway protein modification; protein lipoylation via endogenous pathway; protein N(6)-(lipoyl)lysine from octanoyl-[acyl-carrier-protein]: step 2/2. In terms of biological role, catalyzes the radical-mediated insertion of two sulfur atoms into the C-6 and C-8 positions of the octanoyl moiety bound to the lipoyl domains of lipoate-dependent enzymes, thereby converting the octanoylated domains into lipoylated derivatives. The sequence is that of Lipoyl synthase from Halorubrum lacusprofundi (strain ATCC 49239 / DSM 5036 / JCM 8891 / ACAM 34).